A 550-amino-acid polypeptide reads, in one-letter code: Dihydroxy-acid dehydratase (550 aa).

Asp-78 serves as a coordination point for Mg(2+). Cys-119 serves as a coordination point for [2Fe-2S] cluster. Asp-120 and Lys-121 together coordinate Mg(2+). Lys-121 carries the N6-carboxylysine modification. Cys-191 provides a ligand contact to [2Fe-2S] cluster. Mg(2+) is bound at residue Glu-440. Ser-466 serves as the catalytic Proton acceptor.

It belongs to the IlvD/Edd family. In terms of assembly, homodimer. [2Fe-2S] cluster serves as cofactor. Mg(2+) is required as a cofactor.

The catalysed reaction is (2R)-2,3-dihydroxy-3-methylbutanoate = 3-methyl-2-oxobutanoate + H2O. It catalyses the reaction (2R,3R)-2,3-dihydroxy-3-methylpentanoate = (S)-3-methyl-2-oxopentanoate + H2O. It functions in the pathway amino-acid biosynthesis; L-isoleucine biosynthesis; L-isoleucine from 2-oxobutanoate: step 3/4. The protein operates within amino-acid biosynthesis; L-valine biosynthesis; L-valine from pyruvate: step 3/4. In terms of biological role, functions in the biosynthesis of branched-chain amino acids. Catalyzes the dehydration of (2R,3R)-2,3-dihydroxy-3-methylpentanoate (2,3-dihydroxy-3-methylvalerate) into 2-oxo-3-methylpentanoate (2-oxo-3-methylvalerate) and of (2R)-2,3-dihydroxy-3-methylbutanoate (2,3-dihydroxyisovalerate) into 2-oxo-3-methylbutanoate (2-oxoisovalerate), the penultimate precursor to L-isoleucine and L-valine, respectively. The chain is Dihydroxy-acid dehydratase from Methanococcus maripaludis (strain DSM 14266 / JCM 13030 / NBRC 101832 / S2 / LL).